The chain runs to 557 residues: MESESSRRMGNACIPLKRIAYFLCLFSVVLLTEGKKPAKPKCPAVCTCSKDNALCENARSIPRTVPPDVISLSFVRSGFTEISEGSFLFTPSLQLLLFTSNSFDVISDDAFIGLPHLEYLFIENNNIKSISRHTFRGLKSLIHLSLANNNLQTLPKDIFKGLDSLTNVDLRGNAFNCDCKLKWLVEWLGHTNATVEDIYCEGPPEYKKRKINSLSPKDFDCIITEFAKSQDLPYQSLSIDTFSYLNDEYVVIAQPFTGKCIFLEWDHVEKTFRNYDNITGTSTVVCKPIVIDTQLYVIVAQLFGGSHIYKRDGFANKFIKIQDIEVLKIRKPNDIETFKIEDNWYFVVADSSKAGFTTIYKWNGNGFYSHQSLHAWYRDTDVEYLEIARPPLALRTPHLILSSSSQRPVIYQWSKATQLFTNQTDIPNMEDVYAVKHFSVKGDVYICLTRFIGDSKVMKWGGSSFQDIQRMPSRGSMVFQPLQINNYQYAILGSDYSFTQVYNWDAEKAKFVKFQELNVQAPRSFTHVSINKRNFLFASSFKGNTQIYKHVIVDLSA.

The first 34 residues, 1–34 (MESESSRRMGNACIPLKRIAYFLCLFSVVLLTEG), serve as a signal peptide directing secretion. Residues 35-72 (KKPAKPKCPAVCTCSKDNALCENARSIPRTVPPDVISL) form the LRRNT domain. LRR repeat units lie at residues 92 to 113 (SLQL…AFIG), 116 to 137 (HLEY…TFRG), and 140 to 161 (SLIH…IFKG). The 51-residue stretch at 173–223 (NAFNCDCKLKWLVEWLGHTNATVEDIYCEGPPEYKKRKINSLSPKDFDCII) folds into the LRRCT domain. The N-linked (GlcNAc...) asparagine glycan is linked to asparagine 192. EAR repeat units follow at residues 225–267 (EFAK…EWDH), 271–313 (TFRN…KRDG), 317–364 (KFIK…KWNG), 366–415 (GFYS…QWSK), 419–462 (LFTN…KWGG), 464–506 (SFQD…NWDA), and 510–552 (KFVK…KHVI). Residue asparagine 277 is glycosylated (N-linked (GlcNAc...) asparagine). An N-linked (GlcNAc...) asparagine glycan is attached at asparagine 422.

In terms of assembly, oligomer. Interacts with KCNA1 within a complex containing KCNA1, KCNA4 and KCNAB1. Part of a complex containing ADAM22, DLG4/PSD95 and CACNG2 (stargazin). Can bind to ADAM11 and ADAM23. Post-translationally, glycosylated. In terms of tissue distribution, expressed in the brain (at protein level). Expressed in cerebellar cortex basket cell terminals (at protein level). Highly expressed in the dentate gyrus and CA3 field of the hippocampus.

Its subcellular location is the secreted. The protein localises to the synapse. It is found in the cytoplasm. It localises to the golgi apparatus. The protein resides in the endoplasmic reticulum. In terms of biological role, regulates voltage-gated potassium channels assembled from KCNA1, KCNA4 and KCNAB1. It slows down channel inactivation by precluding channel closure mediated by the KCNAB1 subunit. Ligand for ADAM22 that positively regulates synaptic transmission mediated by AMPA-type glutamate receptors. Plays a role in suppressing the production of MMP1/3 through the phosphatidylinositol 3-kinase/ERK pathway. This is Leucine-rich glioma-inactivated protein 1 from Mus musculus (Mouse).